A 201-amino-acid chain; its full sequence is Small ribosomal subunit protein uS4 (201 aa).

The interval methionine 1–lysine 42 is disordered. The region spanning serine 91–alanine 157 is the S4 RNA-binding domain.

It belongs to the universal ribosomal protein uS4 family. In terms of assembly, part of the 30S ribosomal subunit. Contacts protein S5. The interaction surface between S4 and S5 is involved in control of translational fidelity.

Functionally, one of the primary rRNA binding proteins, it binds directly to 16S rRNA where it nucleates assembly of the body of the 30S subunit. With S5 and S12 plays an important role in translational accuracy. The polypeptide is Small ribosomal subunit protein uS4 (Mycolicibacterium smegmatis (strain ATCC 700084 / mc(2)155) (Mycobacterium smegmatis)).